We begin with the raw amino-acid sequence, 218 residues long: LHFPL tetraspan subfamily member 3 protein (218 aa).

Transmembrane regions (helical) follow at residues Ile-22–Ile-42, Phe-96–Phe-116, Ile-126–Pro-146, and Ile-177–Gly-197.

It belongs to the LHFP family.

The protein resides in the membrane. This Xenopus laevis (African clawed frog) protein is LHFPL tetraspan subfamily member 3 protein.